The chain runs to 364 residues: 4-hydroxythreonine-4-phosphate dehydrogenase (364 aa).

Residues His-148 and Thr-149 each coordinate substrate. Residues His-177, His-216, and His-301 each coordinate a divalent metal cation. The substrate site is built by Lys-309, Asn-318, and Arg-327.

It belongs to the PdxA family. In terms of assembly, homodimer. Zn(2+) is required as a cofactor. The cofactor is Mg(2+). Requires Co(2+) as cofactor.

It localises to the cytoplasm. The enzyme catalyses 4-(phosphooxy)-L-threonine + NAD(+) = 3-amino-2-oxopropyl phosphate + CO2 + NADH. Its pathway is cofactor biosynthesis; pyridoxine 5'-phosphate biosynthesis; pyridoxine 5'-phosphate from D-erythrose 4-phosphate: step 4/5. Functionally, catalyzes the NAD(P)-dependent oxidation of 4-(phosphooxy)-L-threonine (HTP) into 2-amino-3-oxo-4-(phosphooxy)butyric acid which spontaneously decarboxylates to form 3-amino-2-oxopropyl phosphate (AHAP). This Campylobacter jejuni subsp. jejuni serotype O:2 (strain ATCC 700819 / NCTC 11168) protein is 4-hydroxythreonine-4-phosphate dehydrogenase.